Here is a 408-residue protein sequence, read N- to C-terminus: Branched-chain amino acid aminotransferase 2, chloroplastic (408 aa).

A chloroplast-targeting transit peptide spans 1–58 (MDCAAALLPGFHPNYLLCPSRHFSSLLPKTDLSSPLKFQLQNKQLSLASSHGFSPVIC). Arg152 is a pyridoxal 5'-phosphate binding site. The active-site Proton acceptor is the Lys254. N6-(pyridoxal phosphate)lysine is present on Lys254. Glu290 is a pyridoxal 5'-phosphate binding site.

Belongs to the class-IV pyridoxal-phosphate-dependent aminotransferase family. Pyridoxal 5'-phosphate serves as cofactor. As to expression, expressed in lupulin glands and leaves.

The protein localises to the plastid. Its subcellular location is the chloroplast. The catalysed reaction is L-isoleucine + 2-oxoglutarate = (S)-3-methyl-2-oxopentanoate + L-glutamate. It catalyses the reaction L-leucine + 2-oxoglutarate = 4-methyl-2-oxopentanoate + L-glutamate. It carries out the reaction L-valine + 2-oxoglutarate = 3-methyl-2-oxobutanoate + L-glutamate. It participates in amino-acid biosynthesis; L-isoleucine biosynthesis; L-isoleucine from 2-oxobutanoate: step 4/4. It functions in the pathway amino-acid biosynthesis; L-leucine biosynthesis; L-leucine from 3-methyl-2-oxobutanoate: step 4/4. Its pathway is amino-acid biosynthesis; L-valine biosynthesis; L-valine from pyruvate: step 4/4. Its function is as follows. Converts 2-oxo acids to branched-chain amino acids. Shows no kinetic preferences corresponding to anabolic or catabolic functions, but likely involved in BCAA biosynthesis. In Humulus lupulus (European hop), this protein is Branched-chain amino acid aminotransferase 2, chloroplastic.